A 214-amino-acid polypeptide reads, in one-letter code: Glycine-rich protein 2 (214 aa).

The CSD domain maps to 8-75; sequence RAKGTVKWFS…RTKAVDVTGP (68 aa). A disordered region spans residues 54–91; that stretch reads TVEFEVESGGDGRTKAVDVTGPDGAAVQGGRGGGGGGG. The span at 80–91 shows a compositional bias: gly residues; the sequence is VQGGRGGGGGGG. 2 consecutive CCHC-type zinc fingers follow at residues 157–174 and 194–211; these read SGCF…DCSQ and GGCY…ECTS.

The chain is Glycine-rich protein 2 (GRP-2) from Nicotiana sylvestris (Wood tobacco).